The following is a 204-amino-acid chain: uncharacterized protein (204 aa).

Transmembrane regions (helical) follow at residues 21–50, 92–114, 150–172, and 176–198; these read AWIV…LLFF, FFTA…WWWF, LGLR…VLSI, and LLAS…ETIL.

It localises to the cell membrane. This is an uncharacterized protein from Aquifex aeolicus (strain VF5).